The chain runs to 201 residues: Small ribosomal subunit protein uS4 (201 aa).

The segment at 1–45 (MARYTGPLTKKSRRLGTDLVGNDKSFERRPYPPGVHGRGRTKDSE) is disordered. An S4 RNA-binding domain is found at 91–157 (SRLDNVVYRA…PPIVIARETF (67 aa)).

This sequence belongs to the universal ribosomal protein uS4 family. As to quaternary structure, part of the 30S ribosomal subunit. Contacts protein S5. The interaction surface between S4 and S5 is involved in control of translational fidelity.

In terms of biological role, one of the primary rRNA binding proteins, it binds directly to 16S rRNA where it nucleates assembly of the body of the 30S subunit. Functionally, with S5 and S12 plays an important role in translational accuracy. The chain is Small ribosomal subunit protein uS4 from Cutibacterium acnes (strain DSM 16379 / KPA171202) (Propionibacterium acnes).